A 588-amino-acid chain; its full sequence is Protein gamma response 1 (588 aa).

Coiled coils occupy residues alanine 64–threonine 104 and serine 164–valine 281. 3 stretches are compositionally biased toward basic and acidic residues: residues lysine 377–arginine 389, asparagine 465–aspartate 484, and threonine 508–arginine 525. 2 disordered regions span residues lysine 377–asparagine 398 and proline 417–arginine 525.

In terms of tissue distribution, basal levels in mitotically dividing cells (meristems), and high levels in endoreduplicating cells (stipules, trichomes) (at protein level).

The protein localises to the nucleus. Its function is as follows. Seems to mediate cell cycle arrest before mitosis in response to DNA damage. Is probably also involved in the transition from mitosis to endoreduplication. This chain is Protein gamma response 1 (GR1), found in Arabidopsis thaliana (Mouse-ear cress).